The sequence spans 119 residues: Protein yippee-like 3 (119 aa).

Residues 19 to 116 enclose the Yippee domain; it reads RRYSCVHCRA…IELSHMIKDN (98 aa). Zn(2+)-binding residues include Cys-23, Cys-26, Cys-79, and Cys-82.

The protein belongs to the yippee family.

Its subcellular location is the nucleus. It localises to the nucleolus. May be involved in proliferation and apoptosis in myeloid precursor cells. The polypeptide is Protein yippee-like 3 (ypel3) (Danio rerio (Zebrafish)).